The following is a 314-amino-acid chain: Replication initiation protein (314 aa).

Polar residues predominate over residues 1 to 10 (MSKNNHANHS). The tract at residues 1 to 25 (MSKNNHANHSNHLENHDLDNFSKTG) is disordered. A compositionally biased stretch (basic and acidic residues) spans 11 to 20 (NHLENHDLDN).

The protein belongs to the plasmid replication initiation factor family.

Functionally, this protein is probably a specific topoisomerase involved in initiating replication. This protein is specifically required and may be rate-limiting for replication of the plasmid in vivo. The protein is Replication initiation protein (repN) of Staphylococcus aureus.